The chain runs to 514 residues: 5'-AMP-activated protein kinase subunit gamma-3 (514 aa).

Disordered regions lie at residues Met-1 to Ala-121 and Asp-134 to Asn-155. Polar residues predominate over residues Ser-59–Ser-71. CBS domains lie at Met-222 to Leu-283, Cys-305 to Leu-363, and Thr-380 to Met-440. ADP-binding positions include Arg-250, Met-265 to Asp-270, Val-310, His-331 to Arg-332, and Lys-350. Residues Arg-250, Met-265–Asp-270, Val-310, His-331, His-331–Arg-332, Lys-350, Thr-380, Ala-385, Ser-406–Ala-407, Ser-422–Asp-425, Arg-449, Leu-457, His-478, His-478–Arg-479, and Ser-494–Asp-497 each bind AMP. Residues Arg-250, Met-265–Asp-270, Val-310, His-331–Arg-332, Arg-332, and Lys-350 each bind ATP. Residues Leu-318 to Val-339 carry the AMPK pseudosubstrate motif. Residues Ser-422–Asp-425, Arg-449, Leu-457, and His-478–Arg-479 each bind ADP. Residues Ser-422–Asp-425, Arg-449, Leu-457, and His-478–Arg-479 contribute to the ATP site. The CBS 4 domain maps to Cys-452–Ala-511.

The protein belongs to the 5'-AMP-activated protein kinase gamma subunit family. In terms of assembly, AMPK is a heterotrimer of an alpha catalytic subunit (PRKAA1 or PRKAA2), a beta (PRKAB1 or PRKAB2) and a gamma non-catalytic subunits (PRKAG1, PRKAG2 or PRKAG3). Interacts with FNIP1 and FNIP2. In terms of processing, phosphorylated by ULK1; leading to negatively regulate AMPK activity and suggesting the existence of a regulatory feedback loop between ULK1 and AMPK. Glycosylated; O-GlcNAcylated by OGT, promoting the AMP-activated protein kinase (AMPK) activity. In terms of tissue distribution, muscle.

Functionally, AMP/ATP-binding subunit of AMP-activated protein kinase (AMPK), an energy sensor protein kinase that plays a key role in regulating cellular energy metabolism. In response to reduction of intracellular ATP levels, AMPK activates energy-producing pathways and inhibits energy-consuming processes: inhibits protein, carbohydrate and lipid biosynthesis, as well as cell growth and proliferation. AMPK acts via direct phosphorylation of metabolic enzymes, and by longer-term effects via phosphorylation of transcription regulators. AMPK also acts as a regulator of cellular polarity by remodeling the actin cytoskeleton; probably by indirectly activating myosin. The AMPK gamma3 subunit is a non-catalytic subunit with a regulatory role in muscle energy metabolism. It mediates binding to AMP, ADP and ATP, leading to AMPK activation or inhibition: AMP-binding results in allosteric activation of alpha catalytic subunit (PRKAA1 or PRKAA2) both by inducing phosphorylation and preventing dephosphorylation of catalytic subunits. ADP also stimulates phosphorylation, without stimulating already phosphorylated catalytic subunit. ATP promotes dephosphorylation of catalytic subunit, rendering the AMPK enzyme inactive. The sequence is that of 5'-AMP-activated protein kinase subunit gamma-3 (PRKAG3) from Sus scrofa (Pig).